Consider the following 525-residue polypeptide: Phosphatidylinositol 4-kinase alpha 2 (525 aa).

A pleckstrin homology (PH) domain conferring phosphoinositide binding specificity region spans residues 163–278; that stretch reads SDVRQHIVDG…VKPQACIFKV (116 aa). The region spanning 239–509 is the PI3K/PI4K catalytic domain; that stretch reads VDSGIPLQSA…VCTDAYNKWT (271 aa). The segment at 245-251 is G-loop; sequence LQSAAKV. The catalytic loop stretch occupies residues 373–381; the sequence is QPKDRHNGN. Residues 392–417 are activation loop; sequence HIDFGFILETSPGGNMRFENAHFKLS.

The protein belongs to the PI3/PI4-kinase family. Type III PI4K subfamily.

It localises to the membrane. The catalysed reaction is a 1,2-diacyl-sn-glycero-3-phospho-(1D-myo-inositol) + ATP = a 1,2-diacyl-sn-glycero-3-phospho-(1D-myo-inositol 4-phosphate) + ADP + H(+). Functionally, acts on phosphatidylinositol (PtdIns) in the first committed step in the production of the second messenger inositol-1,4,5,-trisphosphate. The protein is Phosphatidylinositol 4-kinase alpha 2 (PI4KA2) of Arabidopsis thaliana (Mouse-ear cress).